Reading from the N-terminus, the 114-residue chain is MDRVTRLASQKAVVVFSKSSCGMSHAVTRLLRELGVDARVVELDEEPAGADMENALAGMLLAGTAANGGGRGRGVVVPTVFIGGRLVGSTDRVMSLHVAGGLVPLLRDAGALWV.

The 113-residue stretch at Met1–Trp113 folds into the Glutaredoxin domain. Cys21 lines the [2Fe-2S] cluster pocket.

The protein belongs to the glutaredoxin family. CC-type subfamily.

It is found in the cytoplasm. Its function is as follows. May only reduce GSH-thiol disulfides, but not protein disulfides. This chain is Monothiol glutaredoxin-S8 (GRXS8), found in Oryza sativa subsp. japonica (Rice).